Reading from the N-terminus, the 278-residue chain is Probable velvet family sexual development regulator SCHCODRAFT_28806 (278 aa).

The region spanning 51–255 (GRTIRASLDE…ARVGVRLSVR (205 aa)) is the Velvet domain. Positions 257–278 (TGKKATTKRRKRSDSFDEDDSS) are disordered.

This sequence belongs to the velvet family.

The protein localises to the nucleus. Functionally, velvet-domain-containing protein that probably acts as a positive regulator of sexual development. The chain is Probable velvet family sexual development regulator SCHCODRAFT_28806 from Schizophyllum commune (strain H4-8 / FGSC 9210) (Split gill fungus).